Here is a 311-residue protein sequence, read N- to C-terminus: tRNA-cytidine(32) 2-sulfurtransferase (311 aa).

The PP-loop motif signature appears at Ser-47 to Ser-52. Positions 122, 125, and 213 each coordinate [4Fe-4S] cluster.

This sequence belongs to the TtcA family. As to quaternary structure, homodimer. Mg(2+) serves as cofactor. It depends on [4Fe-4S] cluster as a cofactor.

It is found in the cytoplasm. The catalysed reaction is cytidine(32) in tRNA + S-sulfanyl-L-cysteinyl-[cysteine desulfurase] + AH2 + ATP = 2-thiocytidine(32) in tRNA + L-cysteinyl-[cysteine desulfurase] + A + AMP + diphosphate + H(+). The protein operates within tRNA modification. Its function is as follows. Catalyzes the ATP-dependent 2-thiolation of cytidine in position 32 of tRNA, to form 2-thiocytidine (s(2)C32). The sulfur atoms are provided by the cysteine/cysteine desulfurase (IscS) system. In Salmonella typhimurium (strain LT2 / SGSC1412 / ATCC 700720), this protein is tRNA-cytidine(32) 2-sulfurtransferase.